A 344-amino-acid polypeptide reads, in one-letter code: tRNA N6-adenosine threonylcarbamoyltransferase (344 aa).

Residues His-119 and His-123 each coordinate Fe cation. Substrate is bound by residues 141–145, Asp-174, Gly-187, Asp-191, and Asn-280; that span reads VVSGG. Asp-310 lines the Fe cation pocket.

It belongs to the KAE1 / TsaD family. The cofactor is Fe(2+).

It is found in the cytoplasm. The enzyme catalyses L-threonylcarbamoyladenylate + adenosine(37) in tRNA = N(6)-L-threonylcarbamoyladenosine(37) in tRNA + AMP + H(+). Functionally, required for the formation of a threonylcarbamoyl group on adenosine at position 37 (t(6)A37) in tRNAs that read codons beginning with adenine. Is involved in the transfer of the threonylcarbamoyl moiety of threonylcarbamoyl-AMP (TC-AMP) to the N6 group of A37, together with TsaE and TsaB. TsaD likely plays a direct catalytic role in this reaction. The protein is tRNA N6-adenosine threonylcarbamoyltransferase of Listeria innocua serovar 6a (strain ATCC BAA-680 / CLIP 11262).